Here is a 156-residue protein sequence, read N- to C-terminus: Putative pre-16S rRNA nuclease (156 aa).

It belongs to the YqgF nuclease family.

The protein localises to the cytoplasm. Its function is as follows. Could be a nuclease involved in processing of the 5'-end of pre-16S rRNA. This chain is Putative pre-16S rRNA nuclease, found in Ehrlichia chaffeensis (strain ATCC CRL-10679 / Arkansas).